The chain runs to 188 residues: dCTP deaminase (188 aa).

DCTP-binding positions include 111 to 116, 135 to 137, glutamine 156, tyrosine 170, and glutamine 180; these read KSTYAR and TLE. Catalysis depends on glutamate 137, which acts as the Proton donor/acceptor.

This sequence belongs to the dCTP deaminase family. In terms of assembly, homotrimer.

The enzyme catalyses dCTP + H2O + H(+) = dUTP + NH4(+). It functions in the pathway pyrimidine metabolism; dUMP biosynthesis; dUMP from dCTP (dUTP route): step 1/2. Its function is as follows. Catalyzes the deamination of dCTP to dUTP. This chain is dCTP deaminase, found in Methylococcus capsulatus (strain ATCC 33009 / NCIMB 11132 / Bath).